Consider the following 300-residue polypeptide: uncharacterized protein (300 aa).

The a divalent metal cation site is built by E146, E148, and D177.

It belongs to the FAH family.

This is an uncharacterized protein from Staphylococcus aureus (strain MW2).